A 616-amino-acid chain; its full sequence is Sodium- and chloride-dependent transporter XTRP3 (616 aa).

The segment covering 1-11 has biased composition (basic residues); it reads MRLAIKRRASR. The segment at 1–26 is disordered; the sequence is MRLAIKRRASRGQRPGPDEKRARDME. At 1 to 37 the chain is on the cytoplasmic side; the sequence is MRLAIKRRASRGQRPGPDEKRARDMEKARPQWGNPLQ. Residues 16-26 are compositionally biased toward basic and acidic residues; that stretch reads GPDEKRARDME. A helical transmembrane segment spans residues 38–58; that stretch reads FVFACISYAVGLGNVWRFPYL. The Extracellular portion of the chain corresponds to 59 to 66; sequence CQMYGGGS. Residues 67 to 87 traverse the membrane as a helical segment; it reads FLVPYLIMLIVEGMPLLYLEL. Over 88–103 the chain is Cytoplasmic; that stretch reads AVGQRMRQGSIGAWRT. Residues 104–124 form a helical membrane-spanning segment; sequence ISPYLSGVGVASVVVSFFLSM. The Extracellular portion of the chain corresponds to 125–189; it reads YYNVINAWGF…ISPSIQENGG (65 aa). Asn-155 carries N-linked (GlcNAc...) asparagine glycosylation. A helical transmembrane segment spans residues 190–210; sequence VQWEPALCLTLAWLMVYLCIL. Residues 211 to 218 are Cytoplasmic-facing; sequence RGTESTGK. Residues 219–239 traverse the membrane as a helical segment; sequence VVYFTALMPYCVLIIYLVRGL. Over 240 to 265 the chain is Extracellular; it reads TLHGATNGLMYMFTPKIEQLANPKAW. A helical transmembrane segment spans residues 266–286; that stretch reads INAATQIFFSLGLGFGSLIAF. Over 287–300 the chain is Cytoplasmic; the sequence is ASYNEPSNDCQKHA. The helical transmembrane segment at 301–321 threads the bilayer; the sequence is VIVSVINSSTSIFASIVTFSI. At 322-413 the chain is on the extracellular side; it reads YGFKATFNYE…EAIKNMEVSQ (92 aa). An N-linked (GlcNAc...) asparagine glycan is attached at Asn-381. The chain crosses the membrane as a helical span at residues 414–434; the sequence is LWSVLYFFMLLMLGMGSMLGN. Topologically, residues 435–455 are cytoplasmic; the sequence is TAAILTPLTDSKVISSYLPKE. A helical membrane pass occupies residues 456–476; the sequence is AISGLVCLINCAVGMVFTMEA. Over 477–489 the chain is Extracellular; sequence GNYWFDIFNDYAA. The chain crosses the membrane as a helical span at residues 490–510; sequence TLSLLLIVLVETIAVCYVYGL. Residues 511 to 533 are Cytoplasmic-facing; sequence RRFESDLRAMTGRPLNWYWKAMW. A helical membrane pass occupies residues 534 to 554; the sequence is AFVSPLLIIGLFIFYLSDYIL. The Extracellular segment spans residues 555–578; that stretch reads TGTLQYQAWDATQGQLVTKDYPPH. The helical transmembrane segment at 579–599 threads the bilayer; the sequence is ALAVIGLLVASSTMCIPLVAL. The Cytoplasmic segment spans residues 600–616; sequence GTFIRNRLKRGGSSPVA.

It belongs to the sodium:neurotransmitter symporter (SNF) (TC 2.A.22) family. SLC6A20 subfamily. Highly expressed in epithelial cells of duodenum, jejunum, ileum, stomach, cecum, colon and kidney proximal tubule. Also expressed in the choroid plexus, microglia and meniges of the brain and in the ovary.

Its subcellular location is the apical cell membrane. The catalysed reaction is L-proline(out) + chloride(out) + 2 Na(+)(out) = L-proline(in) + chloride(in) + 2 Na(+)(in). It carries out the reaction 4-hydroxy-L-proline(out) + chloride(out) + 2 Na(+)(out) = 4-hydroxy-L-proline(in) + chloride(in) + 2 Na(+)(in). It catalyses the reaction 2-methyl-2-(methylamino)propanoate(out) + chloride(out) + 2 Na(+)(out) = 2-methyl-2-(methylamino)propanoate(in) + chloride(in) + 2 Na(+)(in). The enzyme catalyses L-pipecolate(out) + chloride(out) + 2 Na(+)(out) = L-pipecolate(in) + chloride(in) + 2 Na(+)(in). The catalysed reaction is glycine betaine(out) + chloride(out) + 2 Na(+)(out) = glycine betaine(in) + chloride(in) + 2 Na(+)(in). It carries out the reaction glycine(out) + chloride(out) + 2 Na(+)(out) = glycine(in) + chloride(in) + 2 Na(+)(in). Functionally, mediates the Na(+)- and Cl(-)-dependent uptake of imino acids such as L-proline, N-methyl-L-proline and pipecolate as well as N-methylated amino acids. Also transports glycine, regulates proline and glycine homeostasis in the brain playing a role in the modulation of NMDAR currents. The protein is Sodium- and chloride-dependent transporter XTRP3 of Rattus norvegicus (Rat).